The chain runs to 167 residues: MSVKPIDNYITNSVRLFEVNPSQTLFSISYKPPTQKTDTKVSFRTHNSHLSLNYKFTTNKSKDVSRLLSALGPRGVSITPGKIEKIAQSKKKNNKIKESSKKIKGKSIQDIVGLATLIVNTDVEKSDPAAKKTATEPKQKANAVQNNNGNSAASKKKKNKNKGKKKR.

S2 is subject to N-acetylserine. A compositionally biased stretch (basic and acidic residues) spans 123-139; it reads VEKSDPAAKKTATEPKQ. The disordered stretch occupies residues 123-167; the sequence is VEKSDPAAKKTATEPKQKANAVQNNNGNSAASKKKKNKNKGKKKR. The segment covering 154–167 has biased composition (basic residues); that stretch reads SKKKKNKNKGKKKR.

As to quaternary structure, fungal signal recognition particle (SRP) complex consists of a 7S RNA molecule (scR1) and at least six protein subunits: SRP72, SRP68, SRP54, SEC65, SRP21 and SRP14. At least SRP14, SRP21, SRP68 and SRP72 are proposed to get assembled together with scR1 RNA as a pre-SRP complex in the nucleolus which is exported to the cytoplasm.

The protein localises to the cytoplasm. It is found in the nucleus. Signal-recognition-particle (SRP) assembly has a crucial role in targeting secretory proteins to the rough endoplasmic reticulum (ER) membrane. SRP is required for the cotranslational protein translocation for ER import and preferentially recognizes strongly hydrophobic signal sequences. It is involved in targeting the nascent chain-ribosome (RNC) complex to the ER and is proposed to participate in the arrest of nascent chain elongation during membrane targeting. This Saccharomyces cerevisiae (strain ATCC 204508 / S288c) (Baker's yeast) protein is Signal recognition particle subunit SRP21 (SRP21).